Consider the following 541-residue polypeptide: MFRILSFLCSWILIAFAQPDMSWFFSLLGSAVGYGLLWYSLEPQKSPKLSWRQLTSLLFLWSVTVYGVHFSWMLSDLYVGKFIYVVWGVLISLLALLFTAFSCLLFFIVRKKHTKILWCLPGLWVAVEMVRFYFLCSGMSLDYLGWPITANAYGRQFGGFFGWAGESFILVATGISFYQVLLRKCFSRYVWLGCLLFPYILGGVHYEYLKNTFSKEENLRVAVIQPASSMLLEGPWSGSPAMAWQRLVSLSSIVRKPVDLLIFPEVSVPFGRDRKVYPYDDSQVILSPLTHFKHQDELLANVDWMQALSNHFNCPILMGLERWEELDSKLHLYNSAECISQHGELIGYDKRILVPGGEYIPGGKIGWSVCKKYFPEYALSCQRIPGARSGVIEVENLPKMGVSICYEETFGMLLRNYKREGAKLLVNLTNDGWYPSSRLPQVHFYHGILRNQELGMPCVRSCHTGITVAADALGRVIKMLPYETRYRKASPGVLQVSLPMQNYPTLYAFWGDFPMIFLSLLSIGCIGCYFGYRLLAKKEKA.

A run of 6 helical transmembrane segments spans residues 21-41, 54-74, 89-109, 116-136, 157-177, and 189-209; these read MSWF…WYSL, LTSL…SWML, VLIS…FFIV, ILWC…YFLC, FGGF…GISF, and YVWL…YEYL. The region spanning 219–500 is the CN hydrolase domain; the sequence is LRVAVIQPAS…PGVLQVSLPM (282 aa). Catalysis depends on glutamate 265, which acts as the Proton acceptor. Lysine 350 is a catalytic residue. Cysteine 405 (nucleophile) is an active-site residue. Residues 506–526 traverse the membrane as a helical segment; the sequence is LYAFWGDFPMIFLSLLSIGCI.

It belongs to the CN hydrolase family. Apolipoprotein N-acyltransferase subfamily.

The protein resides in the cell inner membrane. The catalysed reaction is N-terminal S-1,2-diacyl-sn-glyceryl-L-cysteinyl-[lipoprotein] + a glycerophospholipid = N-acyl-S-1,2-diacyl-sn-glyceryl-L-cysteinyl-[lipoprotein] + a 2-acyl-sn-glycero-3-phospholipid + H(+). Its pathway is protein modification; lipoprotein biosynthesis (N-acyl transfer). Catalyzes the phospholipid dependent N-acylation of the N-terminal cysteine of apolipoprotein, the last step in lipoprotein maturation. This Chlamydia caviae (strain ATCC VR-813 / DSM 19441 / 03DC25 / GPIC) (Chlamydophila caviae) protein is Apolipoprotein N-acyltransferase.